We begin with the raw amino-acid sequence, 316 residues long: Taste receptor type 2 member 3 (316 aa).

The Extracellular segment spans residues 1–6 (MMGLTE). Residues 7-27 (GVFLILSGTQFTLGILVNCFI) traverse the membrane as a helical segment. The Cytoplasmic portion of the chain corresponds to 28–42 (ELVNGSSWFKTKRMS). The helical transmembrane segment at 43–63 (LSDFIITTLALLRIILLCIIL) threads the bilayer. Residues 64–94 (TDSFLIEFSPNTHDSGIIMQIIDVSWTFTNH) lie on the Extracellular side of the membrane. The helical transmembrane segment at 95–115 (LSIWLATCLGVLYCLKIASFS) threads the bilayer. Residues 116-128 (HPTFLWLKWRVSR) lie on the Cytoplasmic side of the membrane. The helical transmembrane segment at 129–149 (VMVWMLLGALLLSCGSTASLI) threads the bilayer. The Extracellular segment spans residues 150–186 (NEFKLYSVFRGIEATRNVTEHFRKKRSEYYLIHVLGT). A glycan (N-linked (GlcNAc...) asparagine) is linked at Asn166. The helical transmembrane segment at 187 to 207 (LWYLPPLIVSLASYSLLIFSL) threads the bilayer. The Cytoplasmic segment spans residues 208-234 (GRHTRQMLQNGTSSRDPTTEAHKRAIR). The helical transmembrane segment at 235-255 (IILSFFFLFLLYFLAFLIASF) threads the bilayer. Topologically, residues 256 to 266 (GNFLPKTKMAK) are extracellular. Residues 267–287 (MIGEVMTMFYPAGHSFILILG) traverse the membrane as a helical segment. The Cytoplasmic segment spans residues 288–316 (NSKLKQTFVVMLRCESGHLKPGSKGPIFS).

The protein belongs to the G-protein coupled receptor T2R family. In terms of tissue distribution, expressed in subsets of taste receptor cells of the tongue and palate epithelium and exclusively in gustducin-positive cells. Expressed in the antrum and fundus (part of the stomach), duodenum and in gastric endocrine cells.

It localises to the membrane. In terms of biological role, gustducin-coupled receptor implicated in the perception of bitter compounds in the oral cavity and the gastrointestinal tract. Signals through PLCB2 and the calcium-regulated cation channel TRPM5. In Homo sapiens (Human), this protein is Taste receptor type 2 member 3 (TAS2R3).